A 203-amino-acid chain; its full sequence is Probable GTP-binding protein EngB (203 aa).

The EngB-type G domain maps to 24–199 (DGSEVAFAGR…HTVIETWLGL (176 aa)). Residues 32–39 (GRSNAGKS), 59–63 (GRTQQ), 77–80 (DLPG), 144–147 (TKAD), and 178–180 (FSS) each bind GTP. Mg(2+) contacts are provided by serine 39 and threonine 61.

Belongs to the TRAFAC class TrmE-Era-EngA-EngB-Septin-like GTPase superfamily. EngB GTPase family. Requires Mg(2+) as cofactor.

Functionally, necessary for normal cell division and for the maintenance of normal septation. In Xylella fastidiosa (strain Temecula1 / ATCC 700964), this protein is Probable GTP-binding protein EngB.